An 85-amino-acid chain; its full sequence is Putative transmembrane protein ORF85 (85 aa).

The next 2 membrane-spanning stretches (helical) occupy residues 12 to 32 (FPPT…KFLS) and 44 to 64 (LGII…GAGI).

The protein resides in the host membrane. The sequence is that of Putative transmembrane protein ORF85 from Acidianus convivator (ABV).